Consider the following 668-residue polypeptide: Myb-like protein W (668 aa).

Disordered stretches follow at residues 57-124 (LDQF…NESV), 246-357 (EKEK…EEEV), 403-432 (KPKS…TDKG), 497-546 (YTNT…NKER), 561-583 (SMGR…TTTS), and 631-668 (QCEE…DEII). A compositionally biased stretch (low complexity) spans 69–121 (NNNNNNNSNNNNNNNNNNNNNNNNNNNNNNNNNNNNNNNNNNYNNYNNNNNNN). Basic and acidic residues predominate over residues 246 to 268 (EKEKRKKEREEREEREKQEKQEQ). Low complexity predominate over residues 293–307 (NNKDNNHNGYYYYYD). The segment covering 308–318 (NDNDNYNDGDD) has biased composition (acidic residues). Basic and acidic residues predominate over residues 319 to 335 (EKEKEKEKEKEKEKENE). The region spanning 344-398 (TSMVNSEEWTEEEVNKMNEIRGKLSTADYNYWDKVSAHVKSKTAEQCQRKYNSRF) is the Myb-like domain. Residues 501–542 (NNNNNNNNNNNNNNNNNNNNNNNNNNNNNNNNNNNNNNNNNN) show a composition bias toward low complexity. Positions 632–641 (CEERKKKEDR) are enriched in basic and acidic residues. Over residues 642-651 (DVDEDGEDDY) the composition is skewed to acidic residues.

This chain is Myb-like protein W (mybW), found in Dictyostelium discoideum (Social amoeba).